A 506-amino-acid chain; its full sequence is Alpha-L-fucosidase 1 (506 aa).

An N-terminal signal peptide occupies residues 1-23 (MNSQITLFFFFFSILSLSQISNS). N-linked (GlcNAc...) asparagine glycosylation is found at N22, N82, N248, N320, N355, and N487.

This sequence belongs to the glycosyl hydrolase 29 family.

It is found in the secreted. Its subcellular location is the extracellular space. The protein resides in the apoplast. It carries out the reaction an alpha-L-fucoside + H2O = L-fucose + an alcohol. Hydrolyzes both 3- and 4-linked fucoses in Lewis determinants. Not active on neither 2-linked fucose nor on fucose in alpha-1,3-linkage to the innermost GlcNAc. This Arabidopsis thaliana (Mouse-ear cress) protein is Alpha-L-fucosidase 1 (FUC1).